Reading from the N-terminus, the 1345-residue chain is MLDVNAFDKLKIGLATADDIRGWSYGEVKKPETINYRTLKPEKDGLFGEQIFGPTRDWECACGKYKRVRFKGIVCERCGVEVTRSRVRRERMGHIELAAPVTHIWFFKGVPSRLGYLLGIAPKELEKVIYFASYMVTSVDEEQRHQDLPDLQDEFDHEVQNLERRRNNEIEERAKKLEADLAELEADGEVKGSAKTKLRNGAERDMAAIRQRYDDQIKRIAAVFDKFKSLKPGDMESDVDLWREMEDRYGDYFEGCMGAEAIKKRLQDFDLEAAAKELREEIETGTGQRKARALKRLKVVNAFLTTDNKPEAMVLDVIPVIPPDLRPMVQLDGGRFATSDLNDLYRRVINRNNRLKRLIELGAPEIMLNNEKRMLQEAVDSLFDNGRRGRPVTGASNRPLKSLSDMLKGKQGRFRQNLLGKRVDYSGRSVIVVGPSLRMHQCGLPKPMALELFKPFVIKRLVDLNYAQNMKSAKRLVDRGDSEVWGVLEEVISEHPVLLNRAPTLHRLGIQAFEPILVEGKAIHLPPLACAAFNADFDGDQMAVHLPLSAEAQAEARSLMMASDNILKPADGHTVTMPSQDMILGLYYLSTVIDGAKGQGRIFSSLEEAQMALDKHEIDMQAKVLIRLPQDFVLPKDWEPGEVQVIDPEPGSPDVVKEERFADGSVLFATSLGRILFNDTLPVDYPFINEQAPKGKLSKIVDDIATRYSTQQVAATLDALKDLGFTRAPWSGVTMAFSDIVAPPDREEIIKGYEAQAAKVNNQYDLGLLTEEERRQELINLWTECTDKVAEAMRENFHDDNNVNIMVQSGARGNWMQIRQIAGMRGLVANPKGEIIPRPVKSNYREGLSVLEYFISQHGARKGLADTALRTAESGYLTRRLVDVSQEIIVREEDCGTTHGLPMTVAERDENGNLVLVKAADGGPYSRLLAQDVLDPADGKTVLYHAGDALSMDVLNDLVAHGVEQVIGRSVLTCESKRGVCAKCYGWSLATNKLVDVGEAVGIVAAQSIGEPGTQLTLRSFHSGGVASASDITQGLPRVTELFEARTPKGEAPISEFAGTIKVQDTERGREVILQPDDDSLEPITYQVTRRAPMLVKDGQHVDPGTQLVEGSVDPKKILRILGPRAAQMNIVNEVHDVYRSQGVDIHDKHIEVIVHQMLRRVTVIDSGDTDLLPGELVDRARFREQNKKTVAAGGRPAAGRPELMGITKASLATDSWLSAASFQETTRVLTEAALNEKEDDLKGLKENVIIGKLIPAGTGLARYRNATVEPDKAIRDTIYPNFGLGDGSLGGDLSDGDLGDVDFSNIDFGDLKLGDDFNPDDFLDDNDNPVDFGDEFRIDPDELK.

Zn(2+) is bound by residues Cys60, Cys62, Cys75, and Cys78. Asp536, Asp538, and Asp540 together coordinate Mg(2+). The Zn(2+) site is built by Cys895, Cys974, Cys981, and Cys984. The disordered stretch occupies residues 1325–1345; the sequence is DDNDNPVDFGDEFRIDPDELK. Residues 1335-1345 show a composition bias toward basic and acidic residues; the sequence is DEFRIDPDELK.

The protein belongs to the RNA polymerase beta' chain family. The RNAP catalytic core consists of 2 alpha, 1 beta, 1 beta' and 1 omega subunit. When a sigma factor is associated with the core the holoenzyme is formed, which can initiate transcription. Mg(2+) serves as cofactor. Requires Zn(2+) as cofactor.

It carries out the reaction RNA(n) + a ribonucleoside 5'-triphosphate = RNA(n+1) + diphosphate. In terms of biological role, DNA-dependent RNA polymerase catalyzes the transcription of DNA into RNA using the four ribonucleoside triphosphates as substrates. This chain is DNA-directed RNA polymerase subunit beta', found in Bifidobacterium animalis subsp. lactis (strain AD011).